We begin with the raw amino-acid sequence, 289 residues long: Phosphatidylinositol:ceramide inositolphosphotransferase 3 (289 aa).

Transmembrane regions (helical) follow at residues 33-53 (LVLAGLVFQYIHGLAAHGVHY), 77-97 (AFFSETVFVTIFGSFILWTFH), 115-135 (VFVYLAASQSLRIITFFATQL), 169-189 (VIYGCGDLIFSSHTIFTLVFV), and 199-219 (RWIKHLAWLMAVIQSILIIAS). His181 is a catalytic residue. Active-site residues include His222 and Asp226. The chain crosses the membrane as a helical span at residues 223 to 243 (YTVDIVVAWYTVNLVMFYVDS). A disordered region spans residues 249 to 289 (AERSSGPSPTPLLPLSTKDSKNKSKEDHQRLLNENNVADDH). The segment covering 266–279 (KDSKNKSKEDHQRL) has biased composition (basic and acidic residues). Over residues 280–289 (LNENNVADDH) the composition is skewed to polar residues.

The protein belongs to the sphingomyelin synthase family. In terms of tissue distribution, mostly expressed in stems and flowers, and, to a lower extent, in leaves, roots and siliques.

Its subcellular location is the membrane. In terms of biological role, catalyzes the transfer of the phosphorylinositol group from phosphatidylinositol (PI) to phytoceramide, an essential step in sphingolipid biosynthesis. The sequence is that of Phosphatidylinositol:ceramide inositolphosphotransferase 3 (IPCS3) from Arabidopsis thaliana (Mouse-ear cress).